Consider the following 863-residue polypeptide: Leucine--tRNA ligase (863 aa).

The short motif at 42–53 is the 'HIGH' region element; sequence PYPSGSGLHVGH. Residues 635–639 carry the 'KMSKS' region motif; it reads KMSKS. Residue Lys638 participates in ATP binding.

Belongs to the class-I aminoacyl-tRNA synthetase family.

It localises to the cytoplasm. The catalysed reaction is tRNA(Leu) + L-leucine + ATP = L-leucyl-tRNA(Leu) + AMP + diphosphate. The polypeptide is Leucine--tRNA ligase (Salinibacter ruber (strain DSM 13855 / M31)).